A 167-amino-acid chain; its full sequence is Peptidoglycan L-alanyl-D-glutamate endopeptidase CwlK (167 aa).

The N-terminal stretch at 1 to 26 is a signal peptide; sequence MNLPAKTFVILCILFLLDLCFSYIRH.

The protein belongs to the peptidase M15C family.

The protein localises to the cell membrane. Functionally, cleaves the linkage of the L-alanine-D-glutamic acid of B.subtilis cell wall. This chain is Peptidoglycan L-alanyl-D-glutamate endopeptidase CwlK (cwlK), found in Bacillus subtilis (strain 168).